Consider the following 539-residue polypeptide: MKLLAVRRLFRIQRVVIRYRLDDLLFALPLPWWMLALRFVLPWRWLPRRKSELSRGVRFRLALQDLGPIFIKFGQLLSTRRDLLPEDIADELMLLQDRVPPFDQQLAIKLIEEQLGARICDVFSRFDEKPLASASVAQVHAACLKTGEEVVVKVVRPGLKPIIGQDLAWLFILARMAERVSADARLLHPVQVVMDYEKTIYDELDLLREAANASQLRRNFEGSDLLYVPQVYWDWCRPKVLVMERIYGLQVTDMAGLADQRTDMKLLAERGVEIFFTQIFRDSFFHADMHPGNIFVSTVNPWAPKYIAIDCGIVGSLTPEDQDYLARNLFAFFKRDYRRVAQLHIDSGWVPAETKLNEFEAAIRTVCEPIFEKPLKDISFGQVLMRLFQTARRFNMEVQPQLVLLQKTLLNIEGLGRQLYPELDLWSTAQPYLERWMRERVSPKTLLGNLQSQVEQLPHIAGMTRDLLERMSRPHASDPPRPWHDRKDEPVLRLIGAALLVGGAIQGWVMSEAATQLLTLTAWPAAIMLIAGLYLIVRR.

A helical transmembrane segment spans residues 23–43 (DLLFALPLPWWMLALRFVLPW). The 368-residue stretch at 125 to 492 (RFDEKPLASA…WHDRKDEPVL (368 aa)) folds into the Protein kinase domain. ATP-binding positions include 131-139 (LASASVAQV) and lysine 153. Catalysis depends on aspartate 288, which acts as the Proton acceptor. The next 2 helical transmembrane spans lie at 494–514 (LIGA…SEAA) and 517–537 (LLTL…YLIV).

The protein belongs to the ABC1 family. UbiB subfamily.

It is found in the cell inner membrane. It functions in the pathway cofactor biosynthesis; ubiquinone biosynthesis [regulation]. Its function is as follows. Is probably a protein kinase regulator of UbiI activity which is involved in aerobic coenzyme Q (ubiquinone) biosynthesis. This Pseudomonas syringae pv. syringae (strain B728a) protein is Probable protein kinase UbiB.